The following is a 299-amino-acid chain: 33 kDa chaperonin (299 aa).

2 disulfide bridges follow: cysteine 234–cysteine 236 and cysteine 268–cysteine 271.

The protein belongs to the HSP33 family. Post-translationally, under oxidizing conditions two disulfide bonds are formed involving the reactive cysteines. Under reducing conditions zinc is bound to the reactive cysteines and the protein is inactive.

The protein resides in the cytoplasm. Functionally, redox regulated molecular chaperone. Protects both thermally unfolding and oxidatively damaged proteins from irreversible aggregation. Plays an important role in the bacterial defense system toward oxidative stress. This is 33 kDa chaperonin from Pseudomonas putida (strain ATCC 700007 / DSM 6899 / JCM 31910 / BCRC 17059 / LMG 24140 / F1).